Here is a 712-residue protein sequence, read N- to C-terminus: Cyclolysin secretion/processing ATP-binding protein CyaB (712 aa).

The Peptidase C39 domain maps to 7 to 128 (QCASVPDSGL…ALWAGELLLC (122 aa)). In terms of domain architecture, ABC transmembrane type-1 spans 157–439 (IGEVLLISLV…LAQLWNDFQQ (283 aa)). 6 helical membrane passes run 160–180 (VLLISLVLQFISLLTPLFFQV), 194–214 (LNVIAVGFLAAILFEALLTGI), 272–292 (AVTVLLDVVFSVVFIAVMFFY), 298–318 (LVVLAALPCYFLLSLVLTPVL), 367–387 (VAAGLSVANVAMLANTGVTLI), and 390–410 (LVALGVLWVGATEVVAQRMTV). Positions 471 to 706 (IELDRVSFRY…GGLYARLQAL (236 aa)) constitute an ABC transporter domain. Position 505 to 512 (505 to 512 (GRSGSGKS)) interacts with ATP.

Belongs to the ABC transporter superfamily. Cyclolysin exporter (TC 3.A.1.109.2) family.

Its subcellular location is the cell membrane. Involved in the export of calmodulin-sensitive adenylate cyclase-hemolysin (cyclolysin). The sequence is that of Cyclolysin secretion/processing ATP-binding protein CyaB (cyaB) from Bordetella pertussis (strain ATCC 9797 / DSM 5571 / CCUG 30873 / LMG 14455 / NCTC 10739 / 18323).